Here is a 500-residue protein sequence, read N- to C-terminus: UBX domain-containing protein 5 (500 aa).

A compositionally biased stretch (low complexity) spans 50–61 (SNNTPTPSNSTP). The disordered stretch occupies residues 50–70 (SNNTPTPSNSTPMAPTSVDSD). Phosphoserine is present on S139. 2 disordered regions span residues 142–169 (NQRL…EEND) and 371–399 (ESLN…QEPD). The segment covering 148–161 (TNTNTYINDNSSDS) has biased composition (low complexity). One can recognise a UBX domain in the interval 415–493 (KPGITTRIQI…GLKNSSLLLE (79 aa)).

As to quaternary structure, interacts with CDC48.

The protein localises to the nucleus. It localises to the cytoplasm. In terms of biological role, involved in CDC48-dependent protein degradation through the ubiquitin/proteasome pathway. This is UBX domain-containing protein 5 (UBX5) from Saccharomyces cerevisiae (strain ATCC 204508 / S288c) (Baker's yeast).